The following is an 88-amino-acid chain: Large ribosomal subunit protein bL27 (88 aa).

It belongs to the bacterial ribosomal protein bL27 family.

This chain is Large ribosomal subunit protein bL27, found in Carboxydothermus hydrogenoformans (strain ATCC BAA-161 / DSM 6008 / Z-2901).